The chain runs to 131 residues: uncharacterized protein (131 aa).

An MSP domain is found at 14 to 130 (FLLIYSSLEV…RRLPASFLST (117 aa)).

This is an uncharacterized protein from Caenorhabditis elegans.